The sequence spans 132 residues: Large ribosomal subunit protein bL19 (132 aa).

It belongs to the bacterial ribosomal protein bL19 family.

This protein is located at the 30S-50S ribosomal subunit interface and may play a role in the structure and function of the aminoacyl-tRNA binding site. In Maricaulis maris (strain MCS10) (Caulobacter maris), this protein is Large ribosomal subunit protein bL19.